Here is a 78-residue protein sequence, read N- to C-terminus: Probable Vpr-like protein (78 aa).

Residues 35–43 carry the Nuclear export signal motif; that stretch reads AIRLLQGLF. The short motif at 45–54 is the Nuclear localization signal element; the sequence is RYRFKKPRVD.

It localises to the virion. Its subcellular location is the host nucleus. Seems to function as a Vpr-like protein, since it mediates host cell cycle arrest in G2 phase. Cell cycle arrest creates a favorable environment for maximizing viral expression and production. The sequence is that of Probable Vpr-like protein from Feline immunodeficiency virus (isolate Petaluma) (FIV).